Consider the following 153-residue polypeptide: Deoxyuridine 5'-triphosphate nucleotidohydrolase (153 aa).

Substrate-binding positions include 71–73 (RSG), N84, 88–90 (TID), and K98.

It belongs to the dUTPase family. Requires Mg(2+) as cofactor.

The enzyme catalyses dUTP + H2O = dUMP + diphosphate + H(+). It participates in pyrimidine metabolism; dUMP biosynthesis; dUMP from dCTP (dUTP route): step 2/2. Functionally, this enzyme is involved in nucleotide metabolism: it produces dUMP, the immediate precursor of thymidine nucleotides and it decreases the intracellular concentration of dUTP so that uracil cannot be incorporated into DNA. This chain is Deoxyuridine 5'-triphosphate nucleotidohydrolase, found in Wolbachia pipientis wMel.